We begin with the raw amino-acid sequence, 187 residues long: UPF0301 protein BCI_0481 (187 aa).

This sequence belongs to the UPF0301 (AlgH) family.

This is UPF0301 protein BCI_0481 from Baumannia cicadellinicola subsp. Homalodisca coagulata.